The chain runs to 258 residues: UPF0246 protein YaaA (258 aa).

This sequence belongs to the UPF0246 family.

This is UPF0246 protein YaaA from Escherichia coli O157:H7.